Reading from the N-terminus, the 276-residue chain is Large ribosomal subunit protein uL2c (276 aa).

The segment at 223–254 (VVKNPIDHPHGGGEGRSPIGRAKPVTPWGQPA) is disordered.

Belongs to the universal ribosomal protein uL2 family. In terms of assembly, part of the 50S ribosomal subunit.

The protein resides in the plastid. The protein localises to the chloroplast. This is Large ribosomal subunit protein uL2c (rpl2) from Emiliania huxleyi (Coccolithophore).